The chain runs to 384 residues: 8-amino-7-oxononanoate synthase (384 aa).

Residue Arg21 coordinates substrate. 108-109 (GF) lines the pyridoxal 5'-phosphate pocket. His133 contacts substrate. Pyridoxal 5'-phosphate contacts are provided by Ser179, His207, and Thr233. An N6-(pyridoxal phosphate)lysine modification is found at Lys236. A substrate-binding site is contributed by Thr352.

This sequence belongs to the class-II pyridoxal-phosphate-dependent aminotransferase family. BioF subfamily. Homodimer. Pyridoxal 5'-phosphate serves as cofactor.

It catalyses the reaction 6-carboxyhexanoyl-[ACP] + L-alanine + H(+) = (8S)-8-amino-7-oxononanoate + holo-[ACP] + CO2. The protein operates within cofactor biosynthesis; biotin biosynthesis. Functionally, catalyzes the decarboxylative condensation of pimeloyl-[acyl-carrier protein] and L-alanine to produce 8-amino-7-oxononanoate (AON), [acyl-carrier protein], and carbon dioxide. This is 8-amino-7-oxononanoate synthase from Escherichia coli (strain UTI89 / UPEC).